Reading from the N-terminus, the 123-residue chain is PTS system glucitol/sorbitol-specific EIIA component (123 aa).

In terms of domain architecture, PTS EIIA type-5 spans 1–116; it reads MTVIYQTTIT…PDDIAPGSVL (116 aa). H43 serves as the catalytic Tele-phosphohistidine intermediate. H43 is modified (phosphohistidine; by HPr).

The protein resides in the cytoplasm. In terms of biological role, the phosphoenolpyruvate-dependent sugar phosphotransferase system (sugar PTS), a major carbohydrate active transport system, catalyzes the phosphorylation of incoming sugar substrates concomitantly with their translocation across the cell membrane. The enzyme II complex composed of SrlA, SrlB and SrlE is involved in glucitol/sorbitol transport. The protein is PTS system glucitol/sorbitol-specific EIIA component (srlB) of Shigella flexneri.